A 218-amino-acid polypeptide reads, in one-letter code: Leucine-rich repeat protein 1 (218 aa).

Residues methionine 1 to alanine 27 form the signal peptide. LRR repeat units lie at residues glutamate 94 to leucine 117, asparagine 119 to lysine 140, leucine 141 to isoleucine 165, and serine 167 to histidine 190.

As to quaternary structure, interacts with HIR1.

Its function is as follows. Involved in plant defense response. This is Leucine-rich repeat protein 1 from Arabidopsis thaliana (Mouse-ear cress).